Here is a 176-residue protein sequence, read N- to C-terminus: Photosystem I assembly protein Ycf4 (176 aa).

The next 2 membrane-spanning stretches (helical) occupy residues 22 to 42 (FVWA…GTAS) and 48 to 68 (LIAF…GLFI).

Belongs to the Ycf4 family.

It is found in the plastid thylakoid membrane. Functionally, seems to be required for the assembly of the photosystem I complex. The protein is Photosystem I assembly protein Ycf4 of Cuscuta gronovii (Common dodder).